The primary structure comprises 125 residues: Protein U2 (125 aa).

The protein belongs to the nanovirus U2 protein family.

This Milk vetch dwarf virus (isolate N) (MDV) protein is Protein U2 (DNA-U2).